A 242-amino-acid polypeptide reads, in one-letter code: B-box zinc finger protein 20 (242 aa).

Zn(2+) is bound by residues cysteine 5, cysteine 8, cysteine 28, histidine 33, cysteine 58, cysteine 61, cysteine 81, and histidine 91. The B box-type 1; atypical zinc-finger motif lies at 5–47 (CAVCDKEEASVFCCADEAALCNGCDRHVHFANKLAGKHLRFSL). The B box-type 2; atypical zinc-finger motif lies at 58 to 100 (CDICGERRALLFCQEDRAILCRECDIPIHQANEHTKKHNRFLL). The disordered stretch occupies residues 112 to 153 (YPRASNSNSAAAFGRAKTRPKSVSSEVPSSASNEVFTSSSST). Positions 133–153 (SVSSEVPSSASNEVFTSSSST) are enriched in low complexity.

In terms of assembly, interacts with MED25 and COP1. COP1-mediated ubiquitination and subsequent proteasomal degradation of BBX20 occurs in the dark.

It is found in the nucleus. Its function is as follows. Acts as a positive regulator of seedling photomorphogenesis. Plays a negative role in brassinosteroid responses. The chain is B-box zinc finger protein 20 from Arabidopsis thaliana (Mouse-ear cress).